We begin with the raw amino-acid sequence, 78 residues long: MPVTKPYFVTVAVLLILVDKTTGGLFGLRSGKRREPWVSCELYQGSCRNACQKYEIQYLTCPKKRKCCLKFPMKITRV.

An N-terminal signal peptide occupies residues 1-23 (MPVTKPYFVTVAVLLILVDKTTG). 3 cysteine pairs are disulfide-bonded: C40-C67, C47-C61, and C51-C68.

This sequence belongs to the beta-defensin family.

It localises to the secreted. Its function is as follows. Has antibacterial activity. This Rattus norvegicus (Rat) protein is Beta-defensin 29 (Defb29).